Reading from the N-terminus, the 291-residue chain is Ribonuclease Z (291 aa).

Zn(2+) contacts are provided by histidine 61, histidine 63, aspartate 65, histidine 66, histidine 133, aspartate 201, and histidine 257. Aspartate 65 serves as the catalytic Proton acceptor.

The protein belongs to the RNase Z family. In terms of assembly, homodimer. Zn(2+) serves as cofactor.

It carries out the reaction Endonucleolytic cleavage of RNA, removing extra 3' nucleotides from tRNA precursor, generating 3' termini of tRNAs. A 3'-hydroxy group is left at the tRNA terminus and a 5'-phosphoryl group is left at the trailer molecule.. In terms of biological role, zinc phosphodiesterase, which displays some tRNA 3'-processing endonuclease activity. Probably involved in tRNA maturation, by removing a 3'-trailer from precursor tRNA. The protein is Ribonuclease Z of Saccharolobus islandicus (strain Y.N.15.51 / Yellowstone #2) (Sulfolobus islandicus).